Here is a 249-residue protein sequence, read N- to C-terminus: Secretion system apparatus lipoprotein SsaJ (249 aa).

Residues 1–18 (MKVHRIVFLTVLTFFLTA) form the signal peptide. A lipid anchor (N-palmitoyl cysteine) is attached at C19. A lipid anchor (S-diacylglycerol cysteine) is attached at C19. The helical transmembrane segment at 225–245 (LMLSLTGLLLGVGILIGYFCL) threads the bilayer.

It belongs to the YscJ lipoprotein family.

It is found in the cell outer membrane. Its function is as follows. Component of Salmonella pathogenicity island 2 (SPI-2) type III secretion system, required for secretion of some type III-secreted effectors including the SpvB exotoxin. This is Secretion system apparatus lipoprotein SsaJ (ssaJ) from Salmonella typhimurium (strain 14028s / SGSC 2262).